The primary structure comprises 180 residues: Ubiquitin-conjugating enzyme E2 20 (180 aa).

The disordered stretch occupies residues 1–33 (MAAVNGYQGNTPADPPASNGSKQPAAPTKTVDS). The region spanning 35–180 (SVLKRLQSEL…VEKLYKPPSA (146 aa)) is the UBC core domain. The Glycyl thioester intermediate role is filled by C119.

The protein belongs to the ubiquitin-conjugating enzyme family. Expressed in all tissues with cell division activities and in mature leaves.

The enzyme catalyses S-ubiquitinyl-[E1 ubiquitin-activating enzyme]-L-cysteine + [E2 ubiquitin-conjugating enzyme]-L-cysteine = [E1 ubiquitin-activating enzyme]-L-cysteine + S-ubiquitinyl-[E2 ubiquitin-conjugating enzyme]-L-cysteine.. Its pathway is protein modification; protein ubiquitination. Functionally, accepts the ubiquitin from the E1 complex and catalyzes its covalent attachment to other proteins. This chain is Ubiquitin-conjugating enzyme E2 20 (UBC20), found in Arabidopsis thaliana (Mouse-ear cress).